The following is a 403-amino-acid chain: S-adenosylmethionine synthase (403 aa).

Residue His17 participates in ATP binding. A Mg(2+)-binding site is contributed by Asp19. Glu45 serves as a coordination point for K(+). Positions 58 and 104 each coordinate L-methionine. Residues 104–114 (QSPDIAQGVDT) are flexible loop. ATP contacts are provided by residues 179 to 181 (DGK), 250 to 251 (KF), Asp259, 265 to 266 (RK), Ala282, and Lys286. Residue Asp259 participates in L-methionine binding. Lys290 provides a ligand contact to L-methionine.

It belongs to the AdoMet synthase family. In terms of assembly, homotetramer; dimer of dimers. It depends on Mg(2+) as a cofactor. The cofactor is K(+).

It is found in the cytoplasm. The enzyme catalyses L-methionine + ATP + H2O = S-adenosyl-L-methionine + phosphate + diphosphate. The protein operates within amino-acid biosynthesis; S-adenosyl-L-methionine biosynthesis; S-adenosyl-L-methionine from L-methionine: step 1/1. Its function is as follows. Catalyzes the formation of S-adenosylmethionine (AdoMet) from methionine and ATP. The overall synthetic reaction is composed of two sequential steps, AdoMet formation and the subsequent tripolyphosphate hydrolysis which occurs prior to release of AdoMet from the enzyme. This is S-adenosylmethionine synthase from Mycobacterium bovis (strain ATCC BAA-935 / AF2122/97).